Here is a 103-residue protein sequence, read N- to C-terminus: uncharacterized protein (103 aa).

Composition is skewed to polar residues over residues 1-10 and 18-28; these read MSNSCSTSSY and TRSGSNVNRNY. Residues 1–28 form a disordered region; that stretch reads MSNSCSTSSYPIRRKTPTRSGSNVNRNY.

This is an uncharacterized protein from Acanthamoeba polyphaga mimivirus (APMV).